Reading from the N-terminus, the 528-residue chain is Protein arginine N-methyltransferase 3 (528 aa).

The disordered stretch occupies residues 1–43 (MCSLAAGNGRGAELGPEPLELSDSGDDAGWEDEDADTEPAHGR). Cys-2 carries the N-acetylcysteine modification. A phosphoserine mark is found at Ser-22 and Ser-24. Acidic residues predominate over residues 23–37 (DSGDDAGWEDEDADT). The segment at 46 to 69 (TPCLFCDRLFASAEETFSHCKLEH) adopts a C2H2-type zinc-finger fold. Ser-169 carries the post-translational modification Phosphoserine. A mediates interaction with ALDH1A1 region spans residues 184–528 (MKQFAQDFVM…NSSTQTYSLQ (345 aa)). The region spanning 214-528 (DGVYFSSYGH…NSSTQTYSLQ (315 aa)) is the SAM-dependent MTase PRMT-type domain. S-adenosyl-L-homocysteine-binding residues include Arg-236, Gly-260, Asp-282, Ser-284, Ile-310, and Glu-311. Residues Glu-326 and Glu-335 contribute to the active site.

This sequence belongs to the class I-like SAM-binding methyltransferase superfamily. Protein arginine N-methyltransferase family. In terms of assembly, monomer and homodimer. Interacts with EPB41L3 (via FERM domain); the interaction is direct and inhibits the protein-arginine N-methyltransferase activity of PRMT3. Interacts with the 40S ribosomal protein RPS2. Interacts with ALDH1A1; the interaction is direct, inhibits ALDH1A1 aldehyde dehydrogenase activity and is independent of the methyltransferase activity of PRMT3.

The protein localises to the cytoplasm. Its subcellular location is the cytosol. It localises to the nucleus. The enzyme catalyses L-arginyl-[protein] + S-adenosyl-L-methionine = N(omega)-methyl-L-arginyl-[protein] + S-adenosyl-L-homocysteine + H(+). It carries out the reaction L-arginyl-[protein] + 2 S-adenosyl-L-methionine = N(omega),N(omega)-dimethyl-L-arginyl-[protein] + 2 S-adenosyl-L-homocysteine + 2 H(+). With respect to regulation, inhibited by N-ethylmaleimide and high concentrations of zinc chloride. Protein-arginine N-methyltransferase that catalyzes both the monomethylation and asymmetric dimethylation of the guanidino nitrogens of arginine residues in target proteins, and therefore falls into the group of type I methyltransferases. Catalyzes the asymmetric arginine dimethylation at multiple sites in the Arg/Gly-rich region of small ribosomal subunit protein uS5/RPS2. Also appears to methylate other ribosomal proteins. May regulate retinoic acid synthesis and signaling by inhibiting ALDH1A1 retinal dehydrogenase activity. Contributes to methylation of histone H4 'Arg-3', a specific tag for epigenetic transcriptional activation. Promotes osteogenesis. This is Protein arginine N-methyltransferase 3 from Mus musculus (Mouse).